Here is a 156-residue protein sequence, read N- to C-terminus: SsrA-binding protein (156 aa).

Belongs to the SmpB family.

The protein localises to the cytoplasm. Required for rescue of stalled ribosomes mediated by trans-translation. Binds to transfer-messenger RNA (tmRNA), required for stable association of tmRNA with ribosomes. tmRNA and SmpB together mimic tRNA shape, replacing the anticodon stem-loop with SmpB. tmRNA is encoded by the ssrA gene; the 2 termini fold to resemble tRNA(Ala) and it encodes a 'tag peptide', a short internal open reading frame. During trans-translation Ala-aminoacylated tmRNA acts like a tRNA, entering the A-site of stalled ribosomes, displacing the stalled mRNA. The ribosome then switches to translate the ORF on the tmRNA; the nascent peptide is terminated with the 'tag peptide' encoded by the tmRNA and targeted for degradation. The ribosome is freed to recommence translation, which seems to be the essential function of trans-translation. In Trichodesmium erythraeum (strain IMS101), this protein is SsrA-binding protein.